Reading from the N-terminus, the 510-residue chain is uncharacterized protein (510 aa).

4 disordered regions span residues 1 to 154 (MGSP…ATFL), 208 to 227 (DGNHGNQAKNSGPAETGDLA), 234 to 276 (TRES…QGIL), and 368 to 480 (NFYT…GCPR). Serine 43 bears the Phosphoserine mark. The span at 50–60 (PLVSQQDTSEA) shows a compositional bias: polar residues. The span at 78–92 (EEERLGSPEDEKMDG) shows a compositional bias: basic and acidic residues. Phosphoserine is present on serine 84. Composition is skewed to polar residues over residues 97-109 (SQPSVETEQQVAN) and 118-135 (QPSSESFCAETETGSNRR). Serine 120 carries the phosphoserine modification. The span at 139 to 151 (ASGSEEAKAASAA) shows a compositional bias: low complexity. The segment covering 243-255 (SSLLTTTRGLTSG) has biased composition (low complexity). Over residues 379 to 395 (RTKELQLVAKEDTDSTR) the composition is skewed to basic and acidic residues. Residues 414-441 (SVHQEFSSGDINTRSLQDPGNSQSSGLS) are compositionally biased toward polar residues.

This is an uncharacterized protein from Rattus norvegicus (Rat).